Here is a 538-residue protein sequence, read N- to C-terminus: Phosphoenolpyruvate carboxykinase (ATP) (538 aa).

Substrate contacts are provided by Arg64, Tyr205, and Lys211. ATP is bound by residues Lys211, His230, and 246–254; that span reads GLSGTGKTT. Residues Lys211 and His230 each coordinate Mn(2+). Mn(2+) is bound at residue Asp267. ATP contacts are provided by residues Glu295, Arg331, 447 to 448, and Thr453; that span reads RI. Position 331 (Arg331) interacts with substrate.

The protein belongs to the phosphoenolpyruvate carboxykinase (ATP) family. In terms of assembly, monomer. Mn(2+) serves as cofactor.

Its subcellular location is the cytoplasm. It carries out the reaction oxaloacetate + ATP = phosphoenolpyruvate + ADP + CO2. It functions in the pathway carbohydrate biosynthesis; gluconeogenesis. In terms of biological role, involved in the gluconeogenesis. Catalyzes the conversion of oxaloacetate (OAA) to phosphoenolpyruvate (PEP) through direct phosphoryl transfer between the nucleoside triphosphate and OAA. The polypeptide is Phosphoenolpyruvate carboxykinase (ATP) (Haemophilus influenzae (strain 86-028NP)).